The chain runs to 404 residues: Dual-specificity RNA methyltransferase RlmN (404 aa).

E118 acts as the Proton acceptor in catalysis. The Radical SAM core domain maps to V125–R357. C132 and C368 are disulfide-bonded. 3 residues coordinate [4Fe-4S] cluster: C139, C143, and C146. S-adenosyl-L-methionine is bound by residues G194 to E195, S226, S248 to H250, and N325. The active-site S-methylcysteine intermediate is C368.

Belongs to the radical SAM superfamily. RlmN family. [4Fe-4S] cluster serves as cofactor.

The protein resides in the cytoplasm. The catalysed reaction is adenosine(2503) in 23S rRNA + 2 reduced [2Fe-2S]-[ferredoxin] + 2 S-adenosyl-L-methionine = 2-methyladenosine(2503) in 23S rRNA + 5'-deoxyadenosine + L-methionine + 2 oxidized [2Fe-2S]-[ferredoxin] + S-adenosyl-L-homocysteine. It catalyses the reaction adenosine(37) in tRNA + 2 reduced [2Fe-2S]-[ferredoxin] + 2 S-adenosyl-L-methionine = 2-methyladenosine(37) in tRNA + 5'-deoxyadenosine + L-methionine + 2 oxidized [2Fe-2S]-[ferredoxin] + S-adenosyl-L-homocysteine. In terms of biological role, specifically methylates position 2 of adenine 2503 in 23S rRNA and position 2 of adenine 37 in tRNAs. m2A2503 modification seems to play a crucial role in the proofreading step occurring at the peptidyl transferase center and thus would serve to optimize ribosomal fidelity. This is Dual-specificity RNA methyltransferase RlmN from Caulobacter vibrioides (strain ATCC 19089 / CIP 103742 / CB 15) (Caulobacter crescentus).